The chain runs to 392 residues: Protein-glutamate methylesterase/protein-glutamine glutaminase (392 aa).

The region spanning 9-126 (TVLIVDDSPF…GADIQALARD (118 aa)) is the Response regulatory domain. The residue at position 60 (Asp-60) is a 4-aspartylphosphate. Residues 148-194 (VSRISSASGSRPPWTAGAASENTNRLSSPGSTSSTLGSAKGRSLDSG) are disordered. Positions 173–185 (LSSPGSTSSTLGS) are enriched in low complexity. The region spanning 198-392 (PKYPVEIVAI…RHIVECVQRR (195 aa)) is the CheB-type methylesterase domain. Residues Ser-210, His-237, and Asp-334 contribute to the active site.

It belongs to the CheB family. In terms of processing, phosphorylated by CheA. Phosphorylation of the N-terminal regulatory domain activates the methylesterase activity.

It is found in the cytoplasm. The catalysed reaction is [protein]-L-glutamate 5-O-methyl ester + H2O = L-glutamyl-[protein] + methanol + H(+). It carries out the reaction L-glutaminyl-[protein] + H2O = L-glutamyl-[protein] + NH4(+). Functionally, involved in chemotaxis. Part of a chemotaxis signal transduction system that modulates chemotaxis in response to various stimuli. Catalyzes the demethylation of specific methylglutamate residues introduced into the chemoreceptors (methyl-accepting chemotaxis proteins or MCP) by CheR. Also mediates the irreversible deamidation of specific glutamine residues to glutamic acid. This is Protein-glutamate methylesterase/protein-glutamine glutaminase from Desulfitobacterium hafniense (strain Y51).